The following is a 98-amino-acid chain: uncharacterized protein (98 aa).

Basic residues predominate over residues 1–10 (MARRRKPLHR). Residues 1 to 21 (MARRRKPLHRQRPEPPSWALR) are disordered.

This is an uncharacterized protein from Mycobacterium bovis (strain ATCC BAA-935 / AF2122/97).